Here is a 143-residue protein sequence, read N- to C-terminus: Large ribosomal subunit protein uL11 (143 aa).

It belongs to the universal ribosomal protein uL11 family. As to quaternary structure, part of the ribosomal stalk of the 50S ribosomal subunit. Interacts with L10 and the large rRNA to form the base of the stalk. L10 forms an elongated spine to which L12 dimers bind in a sequential fashion forming a multimeric L10(L12)X complex. Post-translationally, one or more lysine residues are methylated.

Forms part of the ribosomal stalk which helps the ribosome interact with GTP-bound translation factors. This Pseudomonas putida (strain ATCC 700007 / DSM 6899 / JCM 31910 / BCRC 17059 / LMG 24140 / F1) protein is Large ribosomal subunit protein uL11.